Consider the following 148-residue polypeptide: MAKKNQVARNERERKRVHQVNHGFDVLRNRLQPKNHTKKWSKADTLREAVKYIQQLQVLLNQDPQQPSVSSSTPDYTMNNSNNFNNYAVKEEFSMYLPQNYCPQNQMSVPHGDVSHNFNSPTSSVSSSSYSPTQMCYPPVSYSNYPHH.

Disordered regions lie at residues 1 to 21, 63 to 83, and 112 to 132; these read MAKK…HQVN, DPQQ…NSNN, and GDVS…SYSP. A basic motif region spans residues 4 to 17; that stretch reads KNQVARNERERKRV. One can recognise a bHLH domain in the interval 4–56; the sequence is KNQVARNERERKRVHQVNHGFDVLRNRLQPKNHTKKWSKADTLREAVKYIQQL. Positions 18 to 56 are helix-loop-helix motif; the sequence is HQVNHGFDVLRNRLQPKNHTKKWSKADTLREAVKYIQQL. Positions 63-78 are enriched in polar residues; that stretch reads DPQQPSVSSSTPDYTM. Residues 120–132 show a composition bias toward low complexity; that stretch reads SPTSSVSSSSYSP.

Its subcellular location is the nucleus. Probable transcription factor, involved in determining neuroblast cell fate, morphogenesis and aspects of terminal differentiation in both left/right symmetric and asymmetric neuronal lineages. This is Helix-loop-helix protein 14 from Caenorhabditis elegans.